The primary structure comprises 245 residues: Orotidine 5'-phosphate decarboxylase (245 aa).

Residues D22, K44, 71 to 80 (DLKFHDIPNT), T131, R192, Q201, G221, and R222 each bind substrate. The active-site Proton donor is the K73.

The protein belongs to the OMP decarboxylase family. Type 1 subfamily. As to quaternary structure, homodimer.

It catalyses the reaction orotidine 5'-phosphate + H(+) = UMP + CO2. The protein operates within pyrimidine metabolism; UMP biosynthesis via de novo pathway; UMP from orotate: step 2/2. Catalyzes the decarboxylation of orotidine 5'-monophosphate (OMP) to uridine 5'-monophosphate (UMP). The sequence is that of Orotidine 5'-phosphate decarboxylase from Escherichia coli O6:K15:H31 (strain 536 / UPEC).